We begin with the raw amino-acid sequence, 126 residues long: S-adenosylmethionine decarboxylase proenzyme (126 aa).

The active-site Schiff-base intermediate with substrate; via pyruvic acid is the Ser63. Pyruvic acid (Ser); by autocatalysis is present on Ser63. The active-site Proton acceptor; for processing activity is the His68. The active-site Proton donor; for catalytic activity is the Cys83.

It belongs to the prokaryotic AdoMetDC family. Type 1 subfamily. Heterotetramer of two alpha and two beta chains arranged as a dimer of alpha/beta heterodimers. It depends on pyruvate as a cofactor. In terms of processing, is synthesized initially as an inactive proenzyme. Formation of the active enzyme involves a self-maturation process in which the active site pyruvoyl group is generated from an internal serine residue via an autocatalytic post-translational modification. Two non-identical subunits are generated from the proenzyme in this reaction, and the pyruvate is formed at the N-terminus of the alpha chain, which is derived from the carboxyl end of the proenzyme. The post-translation cleavage follows an unusual pathway, termed non-hydrolytic serinolysis, in which the side chain hydroxyl group of the serine supplies its oxygen atom to form the C-terminus of the beta chain, while the remainder of the serine residue undergoes an oxidative deamination to produce ammonia and the pyruvoyl group blocking the N-terminus of the alpha chain.

It catalyses the reaction S-adenosyl-L-methionine + H(+) = S-adenosyl 3-(methylsulfanyl)propylamine + CO2. It participates in amine and polyamine biosynthesis; S-adenosylmethioninamine biosynthesis; S-adenosylmethioninamine from S-adenosyl-L-methionine: step 1/1. Functionally, catalyzes the decarboxylation of S-adenosylmethionine to S-adenosylmethioninamine (dcAdoMet), the propylamine donor required for the synthesis of the polyamines spermine and spermidine from the diamine putrescine. The chain is S-adenosylmethionine decarboxylase proenzyme from Oceanobacillus iheyensis (strain DSM 14371 / CIP 107618 / JCM 11309 / KCTC 3954 / HTE831).